The primary structure comprises 198 residues: FMN-dependent NADH:quinone oxidoreductase (198 aa).

Residues S10, 16 to 18 (SQS), 94 to 97 (MYNF), and 138 to 141 (TRGG) each bind FMN.

It belongs to the azoreductase type 1 family. Homodimer. Requires FMN as cofactor.

It carries out the reaction 2 a quinone + NADH + H(+) = 2 a 1,4-benzosemiquinone + NAD(+). It catalyses the reaction N,N-dimethyl-1,4-phenylenediamine + anthranilate + 2 NAD(+) = 2-(4-dimethylaminophenyl)diazenylbenzoate + 2 NADH + 2 H(+). Its function is as follows. Quinone reductase that provides resistance to thiol-specific stress caused by electrophilic quinones. Functionally, also exhibits azoreductase activity. Catalyzes the reductive cleavage of the azo bond in aromatic azo compounds to the corresponding amines. The chain is FMN-dependent NADH:quinone oxidoreductase from Shewanella baltica (strain OS185).